Here is a 128-residue protein sequence, read N- to C-terminus: Adrenodoxin homolog (128 aa).

In terms of domain architecture, 2Fe-2S ferredoxin-type spans 12–115 (EQIRIFFKTM…NAVFTVPRAT (104 aa)). [2Fe-2S] cluster-binding residues include Cys-50, Cys-56, Cys-59, and Cys-96.

Belongs to the adrenodoxin/putidaredoxin family. [2Fe-2S] cluster is required as a cofactor.

It localises to the mitosome. Ferredoxins are iron-sulfur proteins that transfer electrons in a wide variety of metabolic reactions. This Encephalitozoon cuniculi (strain GB-M1) (Microsporidian parasite) protein is Adrenodoxin homolog.